We begin with the raw amino-acid sequence, 403 residues long: Flavohemoprotein (403 aa).

The region spanning 1–138 is the Globin domain; sequence MLTQKTKDIV…LADILAGMES (138 aa). Heme b is bound at residue His85. Catalysis depends on charge relay system residues Tyr95 and Glu137. A reductase region spans residues 149–403; the sequence is GGWAGWRRFI…EVFGPDLFAE (255 aa). An FAD-binding FR-type domain is found at 152–262; it reads AGWRRFIVRE…AAPYGNFYID (111 aa). Residues Tyr190 and 206–209 contribute to the FAD site; that span reads RQYS. 275-280 serves as a coordination point for NADP(+); that stretch reads GVGLTP. 395–398 serves as a coordination point for FAD; sequence VFGP.

This sequence belongs to the globin family. Two-domain flavohemoproteins subfamily. The protein in the C-terminal section; belongs to the flavoprotein pyridine nucleotide cytochrome reductase family. Requires heme b as cofactor. It depends on FAD as a cofactor.

The enzyme catalyses 2 nitric oxide + NADPH + 2 O2 = 2 nitrate + NADP(+) + H(+). It carries out the reaction 2 nitric oxide + NADH + 2 O2 = 2 nitrate + NAD(+) + H(+). In terms of biological role, is involved in NO detoxification in an aerobic process, termed nitric oxide dioxygenase (NOD) reaction that utilizes O(2) and NAD(P)H to convert NO to nitrate, which protects the bacterium from various noxious nitrogen compounds. Therefore, plays a central role in the inducible response to nitrosative stress. This Rhizobium meliloti (strain 1021) (Ensifer meliloti) protein is Flavohemoprotein.